Reading from the N-terminus, the 517-residue chain is Crotonobetaine/carnitine--CoA ligase (517 aa).

It belongs to the ATP-dependent AMP-binding enzyme family.

The catalysed reaction is 4-(trimethylamino)butanoate + ATP + CoA = 4-(trimethylamino)butanoyl-CoA + AMP + diphosphate. The enzyme catalyses crotonobetaine + ATP + CoA = crotonobetainyl-CoA + AMP + diphosphate. It carries out the reaction (R)-carnitine + ATP + CoA = (R)-carnitinyl-CoA + AMP + diphosphate. It participates in amine and polyamine metabolism; carnitine metabolism. Catalyzes the transfer of CoA to carnitine, generating the initial carnitinyl-CoA needed for the CaiB reaction cycle. Also has activity toward crotonobetaine and gamma-butyrobetaine. The protein is Crotonobetaine/carnitine--CoA ligase of Escherichia coli (strain ATCC 8739 / DSM 1576 / NBRC 3972 / NCIMB 8545 / WDCM 00012 / Crooks).